A 1075-amino-acid chain; its full sequence is DNA-directed RNA polymerase subunit beta (1075 aa).

Belongs to the RNA polymerase beta chain family. In terms of assembly, in plastids the minimal PEP RNA polymerase catalytic core is composed of four subunits: alpha, beta, beta', and beta''. When a (nuclear-encoded) sigma factor is associated with the core the holoenzyme is formed, which can initiate transcription.

Its subcellular location is the plastid. It is found in the chloroplast. It catalyses the reaction RNA(n) + a ribonucleoside 5'-triphosphate = RNA(n+1) + diphosphate. In terms of biological role, DNA-dependent RNA polymerase catalyzes the transcription of DNA into RNA using the four ribonucleoside triphosphates as substrates. This is DNA-directed RNA polymerase subunit beta from Saccharum officinarum (Sugarcane).